Here is a 613-residue protein sequence, read N- to C-terminus: Cleavage and polyadenylation specificity factor subunit 3-II (613 aa).

An HXHXDH motif motif is present at residues H67–H72.

Belongs to the metallo-beta-lactamase superfamily. RNA-metabolizing metallo-beta-lactamase-like family. INTS11 subfamily. Component of the CPSF complex, at least composed of CPSF160, CPSF100, CPSF73-I, CPSF73-II, CPSF30, FY and FIPS5. Interacts with CPSF30, CPSF100, CPSF160 and FY. In terms of tissue distribution, highly expressed in senescence leaves, petals, stamens, pollen and late stages of siliques with seeds. Also detected in roots, stems, leaves and seedlings.

It localises to the nucleus. Component of the cleavage and polyadenylation specificity factor (CPSF) complex that play a key role in pre-mRNA 3'-end formation, recognizing the AAUAAA signal sequence and interacting with poly(A) polymerase and other factors to bring about cleavage and poly(A) addition. May function as mRNA 3'-end-processing endonuclease and also be involved in the histone 3'-end pre-mRNA processing. This is Cleavage and polyadenylation specificity factor subunit 3-II (CPSF73-II) from Arabidopsis thaliana (Mouse-ear cress).